Here is a 238-residue protein sequence, read N- to C-terminus: N-acetylneuraminic acid outer membrane channel protein NanC (238 aa).

The signal sequence occupies residues 1–23; sequence MKKAKILSGVLLLCFSSPLISQA. Residues 24–25 lie on the Periplasmic side of the membrane; it reads AT. The chain crosses the lipid bilayer at residues 26–32; it reads LDVRGGY. Residues 33-39 lie on the Extracellular side of the membrane; that stretch reads RSGSHAY. A membrane pass occupies residues 40–49; the sequence is ETRLKVSEGW. Topologically, residues 50 to 52 are periplasmic; sequence QNG. A membrane pass occupies residues 53 to 61; it reads WWASMESNT. At 62-76 the chain is on the extracellular side; that stretch reads WNTIHDNKKENAALN. A transmembrane span lies at residues 77 to 86; that stretch reads DVQVEVNYAI. Over 87 to 91 the chain is Periplasmic; sequence KLDDQ. Residues 92-102 are membrane-embedded; that stretch reads WTVRPGMLTHF. The Extracellular portion of the chain corresponds to 103-107; the sequence is SSNGT. Residues 108 to 117 are membrane-embedded; that stretch reads RYGPYVKLSW. Residues 118-122 lie on the Periplasmic side of the membrane; it reads DATKD. Positions 123–132 form a transmembrane segment; it reads LKFGIRYRYD. The Extracellular segment spans residues 133 to 151; it reads WKAYRQQDLSGDMSRDNVH. A transmembrane helix spans residues 152–159; it reads RWDGYVTY. The Periplasmic portion of the chain corresponds to 160 to 164; it reads HINSD. A transmembrane helix spans residues 165–173; the sequence is FTFAWQTTL. The Extracellular segment spans residues 174 to 190; that stretch reads YSKQNDYRYANHKKWAT. A transmembrane span lies at residues 191-200; it reads ENAFVLQYHM. Residues 201–203 lie on the Periplasmic side of the membrane; it reads TPD. The segment at 204 to 212 is a transmembrane helix; it reads ITPYIEYDY. The Extracellular portion of the chain corresponds to 213-228; the sequence is LDRQGVYNGRDNLSEN. The hydrophobic stretch at 229–236 threads the membrane; it reads SYRIGVSF. Residues 237–238 lie on the Periplasmic side of the membrane; that stretch reads KL.

This sequence belongs to the oligogalacturonate-specific porin KdgM (TC 1.B.35) family. NanC subfamily. Monomer.

It is found in the cell outer membrane. It catalyses the reaction N-acetylneuraminate(in) = N-acetylneuraminate(out). In terms of biological role, outer membrane channel protein allowing the entry of N-acetylneuraminic acid (Neu5Ac, the most abundant sialic acid on host cell surfaces) into the bacteria. NanC proteins form high-conductance channels which are open at low membrane potentials and which have a weak anion selectivity. This chain is N-acetylneuraminic acid outer membrane channel protein NanC (nanC), found in Escherichia coli O6:H1 (strain CFT073 / ATCC 700928 / UPEC).